The sequence spans 533 residues: Beta-xylosidase (533 aa).

Residue Asp-14 is the Proton acceptor of the active site. The active-site Proton donor is the Glu-186.

It belongs to the glycosyl hydrolase 43 family. Homodimer.

The protein resides in the cell membrane. The catalysed reaction is Hydrolysis of (1-&gt;4)-beta-D-xylans, to remove successive D-xylose residues from the non-reducing termini.. In Bacillus subtilis (strain 168), this protein is Beta-xylosidase (xynB).